A 382-amino-acid chain; its full sequence is MTVLIQGAGIAGLALAREFTKAGIDWLLVERASEIRPIGTGITLASNALTALSSTLDLDRLFRRGMPLAGINVYAHDGSMLMSMPSSLGGNSRGGLALQRHELHAALLEGLDESRIRVGVSIVQILDGLDHERVTLSDGTVHDCSLVVGADGIRSSVRRYVWPEATLRHSGETCWRLVVPHRLEDAELAGEVWGHGKRLGFIQISPREMYVYATLKVRREEPEDEEGFVTPQRLAAHYADFDGIGASIARLIPSATTLVHNDLEELAGASWCRGRVVLIGDAAHAMTPNLGQGAAMALEDAFLLARLWCLAPRAETLILFQQQREARIEFIRKQSWIVGRLGQWESPWSVWLRNTLVRLVPNASRRRLHQRLFTGVGEMAAQ.

This sequence belongs to the 3-hydroxybenzoate 6-hydroxylase family.

The catalysed reaction is 2-heptyl-4(1H)-quinolone + NADH + O2 + H(+) = 2-heptyl-3-hydroxy-4(1H)-quinolone + NAD(+) + H2O. Involved in the terminal step of the biosynthesis of quinolone which in addition to serve as a potent signal for quorum sensing, chelates iron and promotes the formation of membrane vesicles (MVs). Catalyzes the hydroxylation of 2-heptyl-4-quinolone (C7-HHQ) to yield 2-heptyl-3-hydroxy-4-quinolone (PQS). The chain is 2-heptyl-3-hydroxy-4(1H)-quinolone synthase (pqsH) from Pseudomonas aeruginosa (strain ATCC 15692 / DSM 22644 / CIP 104116 / JCM 14847 / LMG 12228 / 1C / PRS 101 / PAO1).